Consider the following 975-residue polypeptide: Protein spalten (975 aa).

2 disordered regions span residues 1–31 (MKKMLFMNKKEKKEEQSPAHSSLAQQHQLAQ) and 64–99 (NLAQLSTSTSSNSSVNNTTNTNTNTTNSSSISSNNN). Over residues 8–17 (NKKEKKEEQS) the composition is skewed to basic and acidic residues. Residues 21 to 70 (SSLAQQHQLAQQQYQLQQQQLQLQYQQHQQQLQLAQQQKQNEQNLAQLST) are a coiled coil. A G-alpha domain is found at 114-458 (FCGTIMILGH…DAEKRGFTTP (345 aa)). The interval 117–130 (TIMILGHTESGKTT) is G1 motif. GTP contacts are provided by residues 122-129 (GHTESGKT), 261-267 (ISAYDQK), 286-290 (GCSGK), and 373-376 (NTSD). The G2 motif stretch occupies residues 259 to 267 (DIISAYDQK). The G3 motif stretch occupies residues 282–291 (VDLFGCSGKQ). The tract at residues 369 to 376 (YLIFNTSD) is G4 motif. Residues 427–432 (VNLLDK) form a G5 motif region. Disordered regions lie at residues 455–520 (FTTP…GSST) and 541–700 (DNDS…VGSK). Composition is skewed to low complexity over residues 460-478 (NQSNSSPVSSIGSNSSRNS), 500-515 (LKNVNNNNNNNNNTTT), and 544-587 (SSYS…NNAT). A compositionally biased stretch (basic and acidic residues) spans 595 to 688 (PPKEPKPVKP…DGAAESKKNG (94 aa)). The region spanning 704–972 (ESGFGSLQGR…DNITVLVVIL (269 aa)) is the PPM-type phosphatase domain. Residues aspartate 749, glycine 750, aspartate 920, and aspartate 963 each contribute to the Mn(2+) site.

In the N-terminal section; belongs to the G-alpha family. The protein in the C-terminal section; belongs to the PP2C family. As to quaternary structure, g proteins are composed of 3 units; alpha, beta and gamma. The alpha chain contains the guanine nucleotide binding site. The cofactor is Mg(2+). Mn(2+) serves as cofactor.

It localises to the cytoplasm. The protein resides in the cytosol. Its subcellular location is the cell membrane. It carries out the reaction O-phospho-L-seryl-[protein] + H2O = L-seryl-[protein] + phosphate. The enzyme catalyses O-phospho-L-threonyl-[protein] + H2O = L-threonyl-[protein] + phosphate. With respect to regulation, inhibited by 50 mM NaF (sodium fluoride). Involved in cell-type differentiation and morphogenesis. Dephosphorylates casein; in vitro. May also be involved as modulators or transducers in various transmembrane signaling systems. The chain is Protein spalten (spnA) from Dictyostelium discoideum (Social amoeba).